The sequence spans 109 residues: Small ribosomal subunit protein bS20 (109 aa).

The protein belongs to the bacterial ribosomal protein bS20 family.

Functionally, binds directly to 16S ribosomal RNA. This chain is Small ribosomal subunit protein bS20, found in Synechococcus sp. (strain JA-2-3B'a(2-13)) (Cyanobacteria bacterium Yellowstone B-Prime).